We begin with the raw amino-acid sequence, 611 residues long: U-box domain-containing protein 12 (611 aa).

Residues 227–301 form the U-box domain; sequence IIPDEFRCPI…SQWCEANGIE (75 aa). ARM repeat units follow at residues 355 to 394, 396 to 435, 437 to 476, and 478 to 517; these read VNNR…NLSI, ENNK…SLSV, DENK…NLCI, and QGNK…ILAG.

It catalyses the reaction S-ubiquitinyl-[E2 ubiquitin-conjugating enzyme]-L-cysteine + [acceptor protein]-L-lysine = [E2 ubiquitin-conjugating enzyme]-L-cysteine + N(6)-ubiquitinyl-[acceptor protein]-L-lysine.. Its pathway is protein modification; protein ubiquitination. Functionally, possesses E3 ubiquitin-protein ligase in vitro. This is U-box domain-containing protein 12 (PUB12) from Oryza sativa subsp. japonica (Rice).